A 98-amino-acid chain; its full sequence is MMSINLNLIMAFLLALAGVLIYRSHLMSTLLCLEGMMLSLFILMALLISHFHMFSASMAPLILLVFSACEAGVGLALLVKTSSNYGNDYVQNLNLLQC.

3 consecutive transmembrane segments (helical) span residues 1-21, 28-48, and 59-79; these read MMSINLNLIMAFLLALAGVLI, STLLCLEGMMLSLFILMALLI, and APLILLVFSACEAGVGLALLV.

It belongs to the complex I subunit 4L family. As to quaternary structure, core subunit of respiratory chain NADH dehydrogenase (Complex I) which is composed of 45 different subunits.

The protein resides in the mitochondrion inner membrane. The catalysed reaction is a ubiquinone + NADH + 5 H(+)(in) = a ubiquinol + NAD(+) + 4 H(+)(out). Its function is as follows. Core subunit of the mitochondrial membrane respiratory chain NADH dehydrogenase (Complex I) which catalyzes electron transfer from NADH through the respiratory chain, using ubiquinone as an electron acceptor. Part of the enzyme membrane arm which is embedded in the lipid bilayer and involved in proton translocation. The chain is NADH-ubiquinone oxidoreductase chain 4L (MT-ND4L) from Lagorchestes hirsutus (Rufous hare-wallaby).